Here is a 139-residue protein sequence, read N- to C-terminus: Transcription antitermination protein NusB (139 aa).

This sequence belongs to the NusB family.

Functionally, involved in transcription antitermination. Required for transcription of ribosomal RNA (rRNA) genes. Binds specifically to the boxA antiterminator sequence of the ribosomal RNA (rrn) operons. The protein is Transcription antitermination protein NusB of Salmonella agona (strain SL483).